The primary structure comprises 391 residues: Solute carrier family 35 member F2 (391 aa).

10 helical membrane passes run methionine 39–threonine 59, leucine 73–valine 93, tryptophan 108–alanine 128, isoleucine 137–leucine 157, phenylalanine 165–methionine 185, leucine 200–glutamine 220, valine 230–isoleucine 250, leucine 267–isoleucine 287, alanine 294–phenylalanine 314, and phenylalanine 318–serine 338. A disordered region spans residues valine 361 to alanine 391. Residues serine 365–glutamine 380 are compositionally biased toward polar residues.

Belongs to the SLC35F solute transporter family.

It localises to the membrane. Functionally, putative solute transporter. The chain is Solute carrier family 35 member F2 (slc35f2) from Xenopus tropicalis (Western clawed frog).